The chain runs to 332 residues: Holliday junction branch migration complex subunit RuvB (332 aa).

The segment at 1-182 (MKLNKNSELK…FGLILKLNYY (182 aa)) is large ATPase domain (RuvB-L). ATP-binding positions include Leu-21, Arg-22, Gly-63, Lys-66, Thr-67, Thr-68, 129-131 (EDY), Arg-172, Tyr-182, and Arg-219. Position 67 (Thr-67) interacts with Mg(2+). The interval 183–253 (SEDELELIIK…ISEIALEKLT (71 aa)) is small ATPAse domain (RuvB-S). The tract at residues 256 to 332 (KNGLDDADYT…FKLFKNDKIK (77 aa)) is head domain (RuvB-H). Arg-311 and Arg-316 together coordinate DNA.

It belongs to the RuvB family. Homohexamer. Forms an RuvA(8)-RuvB(12)-Holliday junction (HJ) complex. HJ DNA is sandwiched between 2 RuvA tetramers; dsDNA enters through RuvA and exits via RuvB. An RuvB hexamer assembles on each DNA strand where it exits the tetramer. Each RuvB hexamer is contacted by two RuvA subunits (via domain III) on 2 adjacent RuvB subunits; this complex drives branch migration. In the full resolvosome a probable DNA-RuvA(4)-RuvB(12)-RuvC(2) complex forms which resolves the HJ.

The protein resides in the cytoplasm. It carries out the reaction ATP + H2O = ADP + phosphate + H(+). In terms of biological role, the RuvA-RuvB-RuvC complex processes Holliday junction (HJ) DNA during genetic recombination and DNA repair, while the RuvA-RuvB complex plays an important role in the rescue of blocked DNA replication forks via replication fork reversal (RFR). RuvA specifically binds to HJ cruciform DNA, conferring on it an open structure. The RuvB hexamer acts as an ATP-dependent pump, pulling dsDNA into and through the RuvAB complex. RuvB forms 2 homohexamers on either side of HJ DNA bound by 1 or 2 RuvA tetramers; 4 subunits per hexamer contact DNA at a time. Coordinated motions by a converter formed by DNA-disengaged RuvB subunits stimulates ATP hydrolysis and nucleotide exchange. Immobilization of the converter enables RuvB to convert the ATP-contained energy into a lever motion, pulling 2 nucleotides of DNA out of the RuvA tetramer per ATP hydrolyzed, thus driving DNA branch migration. The RuvB motors rotate together with the DNA substrate, which together with the progressing nucleotide cycle form the mechanistic basis for DNA recombination by continuous HJ branch migration. Branch migration allows RuvC to scan DNA until it finds its consensus sequence, where it cleaves and resolves cruciform DNA. In Phytoplasma mali (strain AT), this protein is Holliday junction branch migration complex subunit RuvB.